Consider the following 353-residue polypeptide: Photosystem II protein D1 (353 aa).

Thr2 is modified (N-acetylthreonine). Thr2 carries the phosphothreonine modification. The next 3 membrane-spanning stretches (helical) occupy residues 29–46 (YVGW…TAVS), 118–133 (HFFL…EWEL), and 142–156 (WIAV…AATA). Position 118 (His118) interacts with chlorophyll a. Tyr126 contributes to the pheophytin a binding site. Asp170 and Glu189 together coordinate [CaMn4O5] cluster. Residues 197–218 (FHMLGVAGVFGGSLFSAMHGSL) form a helical membrane-spanning segment. Position 198 (His198) interacts with chlorophyll a. Residues His215 and 264 to 265 (SF) contribute to the a quinone site. Residue His215 coordinates Fe cation. His272 serves as a coordination point for Fe cation. Residues 274 to 288 (FLAAWPVVGIWFTAL) form a helical membrane-spanning segment. Residues His332, Glu333, Asp342, and Ala344 each contribute to the [CaMn4O5] cluster site. Residues 345–353 (SVEAPSING) constitute a propeptide that is removed on maturation.

The protein belongs to the reaction center PufL/M/PsbA/D family. In terms of assembly, PSII is composed of 1 copy each of membrane proteins PsbA, PsbB, PsbC, PsbD, PsbE, PsbF, PsbH, PsbI, PsbJ, PsbK, PsbL, PsbM, PsbT, PsbX, PsbY, PsbZ, Psb30/Ycf12, at least 3 peripheral proteins of the oxygen-evolving complex and a large number of cofactors. It forms dimeric complexes. The D1/D2 heterodimer binds P680, chlorophylls that are the primary electron donor of PSII, and subsequent electron acceptors. It shares a non-heme iron and each subunit binds pheophytin, quinone, additional chlorophylls, carotenoids and lipids. D1 provides most of the ligands for the Mn4-Ca-O5 cluster of the oxygen-evolving complex (OEC). There is also a Cl(-1) ion associated with D1 and D2, which is required for oxygen evolution. The PSII complex binds additional chlorophylls, carotenoids and specific lipids. serves as cofactor. Tyr-161 forms a radical intermediate that is referred to as redox-active TyrZ, YZ or Y-Z. In terms of processing, C-terminally processed by CTPA; processing is essential to allow assembly of the oxygen-evolving complex and thus photosynthetic growth.

Its subcellular location is the plastid. It is found in the chloroplast thylakoid membrane. It carries out the reaction 2 a plastoquinone + 4 hnu + 2 H2O = 2 a plastoquinol + O2. In terms of biological role, photosystem II (PSII) is a light-driven water:plastoquinone oxidoreductase that uses light energy to abstract electrons from H(2)O, generating O(2) and a proton gradient subsequently used for ATP formation. It consists of a core antenna complex that captures photons, and an electron transfer chain that converts photonic excitation into a charge separation. The D1/D2 (PsbA/PsbD) reaction center heterodimer binds P680, the primary electron donor of PSII as well as several subsequent electron acceptors. The protein is Photosystem II protein D1 of Tupiella akineta (Green alga).